We begin with the raw amino-acid sequence, 163 residues long: Nucleotide-binding protein ESA_02876 (163 aa).

The protein belongs to the YajQ family.

Functionally, nucleotide-binding protein. The polypeptide is Nucleotide-binding protein ESA_02876 (Cronobacter sakazakii (strain ATCC BAA-894) (Enterobacter sakazakii)).